The sequence spans 197 residues: Signal-regulatory protein delta (197 aa).

The first 29 residues, 1-29 (MPIPASPLHPPLPSLLLYLLLELAGVTHV), serve as a signal peptide directing secretion. An Ig-like V-type domain is found at 31 to 135 (HVQQTEMSQT…IKEYQSGRGT (105 aa)). The cysteines at positions 51 and 117 are disulfide-linked. The tract at residues 139–158 (VTEQNPRPPKNRPAGRAGSR) is disordered. Asn-174 is a glycosylation site (N-linked (GlcNAc...) asparagine).

The protein resides in the secreted. This Homo sapiens (Human) protein is Signal-regulatory protein delta (SIRPD).